The sequence spans 273 residues: ATP synthase subunit a (273 aa).

The next 7 helical transmembrane spans lie at 34–54, 94–114, 115–135, 143–163, 171–191, 218–238, and 244–264; these read IINM…CLFM, FIAP…SLDF, LPVD…LITH, DLNG…FYNI, FVHE…NLLL, FLLI…GHVV, and AIFH…LTLV.

The protein belongs to the ATPase A chain family. In terms of assembly, F-type ATPases have 2 components, CF(1) - the catalytic core - and CF(0) - the membrane proton channel. CF(1) has five subunits: alpha(3), beta(3), gamma(1), delta(1), epsilon(1). CF(0) has three main subunits: a(1), b(2) and c(9-12). The alpha and beta chains form an alternating ring which encloses part of the gamma chain. CF(1) is attached to CF(0) by a central stalk formed by the gamma and epsilon chains, while a peripheral stalk is formed by the delta and b chains.

Its subcellular location is the cell inner membrane. Its function is as follows. Key component of the proton channel; it plays a direct role in the translocation of protons across the membrane. In Janthinobacterium sp. (strain Marseille) (Minibacterium massiliensis), this protein is ATP synthase subunit a.